The following is a 349-amino-acid chain: MDTRADAEIKAMELIGIGVLPLAMKAIIELNVLEILSKAGPDTQLTAAQIVTDIPTTNPNAGFQLDRILRLLASHSVLSSSITKSGERVYGLTPMCKYFLPDQDGVSLAPMVVTIHDKVLLQSWHYLKDSVLKQGSLPFTEAFGMSPFEYSVSDTRFNKVFNAGMFDHSTLCMRDVLQRYKGFQGLGELVDVGGGTGGSLKMILSQYPNLKGINFDLPHVVADAPSFPGVKHIGGDMFESVPSGDAIFMKWILHDWDDGRCLTLLKNCWNALPEHGKVIIVEWILPSDAATDPTSRRVFTADLMMLAFSEGGKERTLGDYGALAKEAGFTTVKDFPCANGISVIEFHKK.

6 residues coordinate S-adenosyl-L-homocysteine: glycine 193, aspartate 216, aspartate 236, methionine 237, methionine 249, and lysine 250. The Proton acceptor role is filled by histidine 254. Catalysis depends on residues glutamate 282 and glutamate 314.

This sequence belongs to the class I-like SAM-binding methyltransferase superfamily. Cation-independent O-methyltransferase family. COMT subfamily. In terms of assembly, homodimer. Mostly expressed in stems, and, to a lower extent, in leaves.

It catalyses the reaction (-)-5'-demethylyatein + S-adenosyl-L-methionine = (-)-yatein + S-adenosyl-L-homocysteine + H(+). It functions in the pathway aromatic compound metabolism; phenylpropanoid biosynthesis. Functionally, O-methyltransferase involved in the biosynthesis of etoposide, a chemotherapeutic compound of the topoisomerase inhibitor family. Catalyzes the methylation of (-)-5'-demethylyatein to produce (-)-yatein. The protein is Desmethyl-yatein O-methyltransferase of Sinopodophyllum hexandrum (Himalayan may apple).